We begin with the raw amino-acid sequence, 316 residues long: HPr kinase/phosphorylase (316 aa).

Active-site residues include His143 and Lys164. 158–165 (GEAGSGKS) provides a ligand contact to ATP. Mg(2+) is bound at residue Ser165. Asp182 acts as the Proton acceptor; for phosphorylation activity. Proton donor; for dephosphorylation activity in catalysis. Positions 206–215 (LEVRGLGVLN) are important for the catalytic mechanism of both phosphorylation and dephosphorylation. A Mg(2+)-binding site is contributed by Glu207. Arg251 is a catalytic residue. An important for the catalytic mechanism of dephosphorylation region spans residues 272 to 277 (PVMPGR).

Belongs to the HPrK/P family. Homohexamer. The cofactor is Mg(2+).

It carries out the reaction [HPr protein]-L-serine + ATP = [HPr protein]-O-phospho-L-serine + ADP + H(+). The catalysed reaction is [HPr protein]-O-phospho-L-serine + phosphate + H(+) = [HPr protein]-L-serine + diphosphate. Catalyzes the ATP- as well as the pyrophosphate-dependent phosphorylation of a specific serine residue in HPr, a phosphocarrier protein of the phosphoenolpyruvate-dependent sugar phosphotransferase system (PTS). HprK/P also catalyzes the pyrophosphate-producing, inorganic phosphate-dependent dephosphorylation (phosphorolysis) of seryl-phosphorylated HPr (P-Ser-HPr). In Stenotrophomonas maltophilia (strain K279a), this protein is HPr kinase/phosphorylase.